We begin with the raw amino-acid sequence, 125 residues long: Diol dehydratase-reactivating factor small subunit (125 aa).

E31 contacts Mg(2+).

It belongs to the DdrB/PduH family. Component of the DDR complex, a heterotetramer of DdrA(2)/DdrB(2). The DDR complex interacts with the diol dehydratase complex in the presence of ADP but not ATP. Requires Mg(2+) as cofactor.

The catalysed reaction is ATP + H2O = ADP + phosphate + H(+). Functionally, small subunit of the diol dehydratase-reactivating factor (DDR), which reactivates suicidally inhibited adenosylcobalamin-dependent diol dehydratase (DD, pddA, pddB, pddC). DDR acts as a chaperone, reactivates inactivated DD holoenzyme in the presence of ATP, Mg(2+) and free adenosylcobalamin (AdoCbl), by mediating the exchange of the tightly bound damaged cofactor AdoCbl for a free intact one. Reactivation takes place in two steps: ADP-dependent cobalamin release, and ATP-dependent dissociation of the DD apoenzyme-DDR complex. DDR has weak ATPase activity which is required for DD reactivation. Activates glycerol-inactivated, O2-inactivated holoenzyme and inactivated enzyme-cyanocobalamin complex. Also reactivates glycerol-inactivated hologlycerol dehydratase, a DD isozyme. This Klebsiella michiganensis (strain ATCC 8724 / DSM 4798 / JCM 20051 / NBRC 3318 / NRRL B-199 / KCTC 1686 / BUCSAV 143 / CCM 1901) protein is Diol dehydratase-reactivating factor small subunit.